Reading from the N-terminus, the 330-residue chain is Probable deoxyhypusine synthase (330 aa).

The interval 1–25 (MTGDDADETHENVVPGSDEDLDTPD) is disordered. Catalysis depends on K298, which acts as the Nucleophile.

The protein belongs to the deoxyhypusine synthase family. Requires NAD(+) as cofactor.

It carries out the reaction [eIF5A protein]-L-lysine + spermidine = [eIF5A protein]-deoxyhypusine + propane-1,3-diamine. It functions in the pathway protein modification; eIF5A hypusination. In terms of biological role, catalyzes the NAD-dependent oxidative cleavage of spermidine and the subsequent transfer of the butylamine moiety of spermidine to the epsilon-amino group of a specific lysine residue of the eIF-5A precursor protein to form the intermediate deoxyhypusine residue. The protein is Probable deoxyhypusine synthase of Halobacterium salinarum (strain ATCC 29341 / DSM 671 / R1).